The sequence spans 228 residues: ATP-dependent dethiobiotin synthetase BioD 1 (228 aa).

ATP is bound at residue 13–18 (EVGKTV). A Mg(2+)-binding site is contributed by T17. The active site involves K38. S42 is a binding site for substrate. ATP contacts are provided by residues D55, 116-119 (EGAG), 176-177 (ND), and 205-207 (PWL). Mg(2+) is bound by residues D55 and E116.

It belongs to the dethiobiotin synthetase family. In terms of assembly, homodimer. It depends on Mg(2+) as a cofactor.

It localises to the cytoplasm. The catalysed reaction is (7R,8S)-7,8-diammoniononanoate + CO2 + ATP = (4R,5S)-dethiobiotin + ADP + phosphate + 3 H(+). It functions in the pathway cofactor biosynthesis; biotin biosynthesis; biotin from 7,8-diaminononanoate: step 1/2. In terms of biological role, catalyzes a mechanistically unusual reaction, the ATP-dependent insertion of CO2 between the N7 and N8 nitrogen atoms of 7,8-diaminopelargonic acid (DAPA, also called 7,8-diammoniononanoate) to form a ureido ring. The polypeptide is ATP-dependent dethiobiotin synthetase BioD 1 (Salmonella typhimurium (strain LT2 / SGSC1412 / ATCC 700720)).